The following is a 139-amino-acid chain: MAVCIAVIAKENYPLYIRSTPTESELKFHYMVHTSLDVVDEKISAMGKALVDQRELYLGLLYPTEDYKVYGYVTNSKVKFVMVVDSSNTALRDNEIRSMFRKLHNSYTDVMCNPFYNPGDRIQSRAFDTMVTSMMIQVC.

It belongs to the TRAPP small subunits family. Sedlin subfamily. Component of the multisubunit TRAPP (transport protein particle) complex, which includes at least TRAPPC2, TRAPPC2L, TRAPPC3, TRAPPC3L, TRAPPC4, TRAPPC5, TRAPPC8, TRAPPC9, TRAPPC10, TRAPPC11 and TRAPPC12. Interacts with the heterodimer TRAPPC3-TRAPPC6A.

It is found in the cytoplasm. Its subcellular location is the perinuclear region. It localises to the endoplasmic reticulum. The protein resides in the golgi apparatus. Functionally, may play a role in vesicular transport from endoplasmic reticulum to Golgi. The polypeptide is Trafficking protein particle complex subunit 2-like protein (Trappc2l) (Mus musculus (Mouse)).